The sequence spans 315 residues: Pantothenate kinase (315 aa).

An ATP-binding site is contributed by 94–101; sequence GSVAVGKS.

Belongs to the prokaryotic pantothenate kinase family.

It localises to the cytoplasm. It catalyses the reaction (R)-pantothenate + ATP = (R)-4'-phosphopantothenate + ADP + H(+). It participates in cofactor biosynthesis; coenzyme A biosynthesis; CoA from (R)-pantothenate: step 1/5. This is Pantothenate kinase from Shewanella amazonensis (strain ATCC BAA-1098 / SB2B).